Here is a 1116-residue protein sequence, read N- to C-terminus: Disease resistance protein RGA5 (1116 aa).

Positions 1–177 (MDAPASFSLG…HHGVSANLVG (177 aa)) are structured coiled coil (CC) domain. The region spanning 182 to 466 (KTKLNRWLSD…WSAEGFVSAN (285 aa)) is the NB-ARC domain. LRR repeat units follow at residues 608 to 631 (LFQL…ISGL), 633 to 653 (YLET…LVHL), 654 to 675 (PNLL…GCMR), 677 to 701 (LRTL…ELTN), 732 to 755 (LSNL…DISS), 786 to 808 (LHKL…DNLT), 810 to 830 (LPSL…RFIF), 835 to 857 (LPVL…AGAM), and 858 to 882 (PNLQ…LFGI). Residues 935-971 (EEESHPLEKQHHKREKGSSAGHGVLEKESVEDSEKNT) are disordered. Over residues 958 to 971 (VLEKESVEDSEKNT) the composition is skewed to basic and acidic residues. Residues 997 to 1066 (RTKIVVKVHM…KCGLAELLMV (70 aa)) form the HMA domain. Residues 1000–1070 (IVVKVHMPCG…AELLMVELVE (71 aa)) are HMA-like domain.

This sequence belongs to the disease resistance NB-LRR family. In terms of assembly, forms homodimer or heterodimer with RGA4 through its coiled coil (CC) domain. Interacts with AVR1-Pia and AVR-CO39 through its C-terminal part containing the HMA-like domain. As to expression, expressed in leaves.

The protein resides in the cytoplasm. In terms of biological role, disease resistance (R) protein that recognizes the AVR-Pia and AVR1-CO39 effector avirulence proteins from M.oryzae. Resistance proteins guard the plant against pathogens that contain an appropriate avirulence protein via an indirect interaction with this avirulence protein. That triggers a defense system including the hypersensitive response, which restricts the pathogen growth. Contribution of RGA4 is required to recognize the effector avirulence proteins AVR-Pia and AVR1-CO39 from M.oryzae. Acts as a repressor of the RGA4-mediated cell death activation. Upon infection, recognition and binding of the AVR effectors relieve the RGA5-mediated repression and triggers the hypersensitive response. Immune response triggered by the RGA4-RGA5 -mediated recognition of AVR1-CO39 confers resistance to X.oryzae pathovars. The polypeptide is Disease resistance protein RGA5 (Oryza sativa subsp. japonica (Rice)).